The following is a 382-amino-acid chain: Anhydro-N-acetylmuramic acid kinase (382 aa).

An ATP-binding site is contributed by 22 to 29 (GTSMDGVD).

This sequence belongs to the anhydro-N-acetylmuramic acid kinase family.

The catalysed reaction is 1,6-anhydro-N-acetyl-beta-muramate + ATP + H2O = N-acetyl-D-muramate 6-phosphate + ADP + H(+). Its pathway is amino-sugar metabolism; 1,6-anhydro-N-acetylmuramate degradation. The protein operates within cell wall biogenesis; peptidoglycan recycling. Functionally, catalyzes the specific phosphorylation of 1,6-anhydro-N-acetylmuramic acid (anhMurNAc) with the simultaneous cleavage of the 1,6-anhydro ring, generating MurNAc-6-P. Is required for the utilization of anhMurNAc either imported from the medium or derived from its own cell wall murein, and thus plays a role in cell wall recycling. In Burkholderia lata (strain ATCC 17760 / DSM 23089 / LMG 22485 / NCIMB 9086 / R18194 / 383), this protein is Anhydro-N-acetylmuramic acid kinase.